The primary structure comprises 97 residues: MPKMVLLPRMTMALGGYIRETTFPYEEDDEVKPFPYRNVIVGNPTDEPIKIEVPAYNEGWIERHKKLGLIVVPVNEDDDFVGLFQMVKEKVKNAKRE.

To M.thermoautotrophicum MTH1236.

This is an uncharacterized protein from Methanocaldococcus jannaschii (strain ATCC 43067 / DSM 2661 / JAL-1 / JCM 10045 / NBRC 100440) (Methanococcus jannaschii).